The primary structure comprises 195 residues: Toxin protein Tse4 (195 aa).

A run of 4 helical transmembrane segments spans residues 20 to 40 (ASGG…ITLL), 116 to 136 (YVEL…LFGL), 140 to 160 (LLAA…GASM), and 171 to 191 (ALLM…AAYL).

It is found in the host membrane. The protein localises to the secreted. In terms of biological role, toxin secreted by the H1 type VI (H1-T6SS) secretion system into the periplasm of recipient cells. The polypeptide is Toxin protein Tse4 (Pseudomonas aeruginosa (strain ATCC 15692 / DSM 22644 / CIP 104116 / JCM 14847 / LMG 12228 / 1C / PRS 101 / PAO1)).